The following is a 385-amino-acid chain: MKDSFLFTSESVTEGHPDKMADQISDAVLDYIIERDQKAKVACETLVSNGFCMITGELKTSVYAPMQEIAREVVKKIGYTDALYGFDYRSAAVLNGVGEQSPDINQGVDREDGEIGAGDQGLMFGYACKETETLMPLPIHLAHQLTFALAQKRKDNTLPFLRPDGKSQVSVRYENNKPVSIDTIVISTQHSPEVSQKHLKEAVIEEIVYKVLSKEYLHDNIKFFVNPTGKFVIGGPQGDAGLTGRKIIVDTYGGSCPHGGGAFSGKDPSKVDRSAAYAARYVAKNLVASGVCDKATVQLAYAIGVIEPVSIYVNTHNTSKYSSAELEKCVKSVFKLTPKGIIESLDLLRPIYSLTSAYGHFGRELEEFTWEKTNKAEEIKAFFKR.

Position 16 (His16) interacts with ATP. Asp18 contacts Mg(2+). Glu44 contacts K(+). The L-methionine site is built by Glu57 and Gln100. The tract at residues 100–110 (QSPDINQGVDR) is flexible loop. Residues 164-166 (DGK), 230-231 (KF), Asp239, 245-246 (RK), Ala262, and Lys266 each bind ATP. Asp239 serves as a coordination point for L-methionine. Position 270 (Lys270) interacts with L-methionine.

It belongs to the AdoMet synthase family. In terms of assembly, homotetramer; dimer of dimers. Requires Mg(2+) as cofactor. The cofactor is K(+).

It localises to the cytoplasm. It carries out the reaction L-methionine + ATP + H2O = S-adenosyl-L-methionine + phosphate + diphosphate. It functions in the pathway amino-acid biosynthesis; S-adenosyl-L-methionine biosynthesis; S-adenosyl-L-methionine from L-methionine: step 1/1. In terms of biological role, catalyzes the formation of S-adenosylmethionine (AdoMet) from methionine and ATP. The overall synthetic reaction is composed of two sequential steps, AdoMet formation and the subsequent tripolyphosphate hydrolysis which occurs prior to release of AdoMet from the enzyme. The protein is S-adenosylmethionine synthase of Helicobacter pylori (strain ATCC 700392 / 26695) (Campylobacter pylori).